The sequence spans 429 residues: UDP-N-acetylglucosamine 1-carboxyvinyltransferase (429 aa).

22 to 23 (KN) is a binding site for phosphoenolpyruvate. UDP-N-acetyl-alpha-D-glucosamine is bound at residue arginine 102. Cysteine 126 (proton donor) is an active-site residue. At cysteine 126 the chain carries 2-(S-cysteinyl)pyruvic acid O-phosphothioketal. UDP-N-acetyl-alpha-D-glucosamine-binding positions include 131-135 (RPVDL), aspartate 316, and isoleucine 338.

Belongs to the EPSP synthase family. MurA subfamily.

It localises to the cytoplasm. The catalysed reaction is phosphoenolpyruvate + UDP-N-acetyl-alpha-D-glucosamine = UDP-N-acetyl-3-O-(1-carboxyvinyl)-alpha-D-glucosamine + phosphate. It participates in cell wall biogenesis; peptidoglycan biosynthesis. In terms of biological role, cell wall formation. Adds enolpyruvyl to UDP-N-acetylglucosamine. This chain is UDP-N-acetylglucosamine 1-carboxyvinyltransferase, found in Rhodopseudomonas palustris (strain HaA2).